Consider the following 280-residue polypeptide: MAPAFGKCFMFCCAKTSPEKDEMATESYEAAIKGLNDLLSTKADLGNVAAAKIKALTAELKELDSSNSDAIERIKTGFTQFKTEKYLKNSTLFNHLAKTQTPKFLVFACSDSRVCPSHILNFQPGEAFVVRNIANMVPPFDQKRHSGVGAAVEYAVVHLKVENILVIGHSCCGGIKGLMSIEDDAAPTQSDFIENWVKIGASARNKIKEEHKDLSYDDQCNKCEKEAVNVSLGNLLSYPFVRAEVVKNTLAIRGGHYNFVKGTFDLWELDFKTTPAFAFS.

A2 bears the N-acetylalanine mark. Positions 47–76 (NVAAAKIKALTAELKELDSSNSDAIERIKT) form a coiled coil. Position 57 is a phosphothreonine (T57). S117 carries the post-translational modification Phosphoserine. C223 is subject to S-nitrosocysteine.

The protein belongs to the beta-class carbonic anhydrase family. In terms of assembly, interacts with DTX56. In terms of tissue distribution, strongly expressed in aerial tissues including leaves, stems, flowers and siliques. Accumulates in both guard cells and mesophyll cells.

Its subcellular location is the cell membrane. The catalysed reaction is hydrogencarbonate + H(+) = CO2 + H2O. In terms of biological role, reversible hydration of carbon dioxide. Together with BCA1, involved in the CO(2) signaling pathway which controls gas-exchange between plants and the atmosphere by modulating stomatal development and movements. Promotes water use efficiency. The chain is Beta carbonic anhydrase 4 from Arabidopsis thaliana (Mouse-ear cress).